The primary structure comprises 196 residues: Adenylate kinase (196 aa).

Position 9–17 (9–17 (GIPGVGKST)) interacts with ATP.

The protein belongs to the archaeal adenylate kinase family.

The protein resides in the cytoplasm. The catalysed reaction is AMP + ATP = 2 ADP. The chain is Adenylate kinase from Thermococcus kodakarensis (strain ATCC BAA-918 / JCM 12380 / KOD1) (Pyrococcus kodakaraensis (strain KOD1)).